A 437-amino-acid polypeptide reads, in one-letter code: Protein farnesyltransferase subunit beta (437 aa).

PFTB repeat units follow at residues 123–164 (ATDV…CIIG), 174–215 (REKL…SLTN), 222–263 (FEGT…VILK), 270–312 (LKSL…PLLH), and 332–374 (QQAL…SIAQ). (2E,6E)-farnesyl diphosphate-binding positions include 248–251 (HGGY) and 291–294 (RCNK). D297 and C299 together coordinate Zn(2+). 300 to 303 (YSFW) is a binding site for (2E,6E)-farnesyl diphosphate. Zn(2+) is bound at residue H362. T436 is modified (phosphothreonine).

Belongs to the protein prenyltransferase subunit beta family. Heterodimer of FNTA and FNTB. Zn(2+) serves as cofactor.

The enzyme catalyses L-cysteinyl-[protein] + (2E,6E)-farnesyl diphosphate = S-(2E,6E)-farnesyl-L-cysteinyl-[protein] + diphosphate. Essential subunit of the farnesyltransferase complex. Catalyzes the transfer of a farnesyl moiety from farnesyl diphosphate to a cysteine at the fourth position from the C-terminus of several proteins having the C-terminal sequence Cys-aliphatic-aliphatic-X. This chain is Protein farnesyltransferase subunit beta (FNTB), found in Homo sapiens (Human).